Here is a 127-residue protein sequence, read N- to C-terminus: Large ribosomal subunit protein eL24 (127 aa).

Positions 93–127 are disordered; that stretch reads KRAQKPEVKQAAAEQAKREIKEKKKAAAKKAAPKK. Over residues 115–127 the composition is skewed to basic residues; sequence KKKAAAKKAAPKK.

It belongs to the eukaryotic ribosomal protein eL24 family.

The chain is Large ribosomal subunit protein eL24 (rpl24) from Dictyostelium discoideum (Social amoeba).